Here is a 225-residue protein sequence, read N- to C-terminus: Sugar fermentation stimulation protein homolog (225 aa).

The protein belongs to the SfsA family.

In Sulfolobus acidocaldarius (strain ATCC 33909 / DSM 639 / JCM 8929 / NBRC 15157 / NCIMB 11770), this protein is Sugar fermentation stimulation protein homolog.